A 393-amino-acid chain; its full sequence is S-adenosylmethionine synthase (393 aa).

An ATP-binding site is contributed by H17. D19 is a Mg(2+) binding site. K(+) is bound at residue E45. L-methionine-binding residues include E58 and Q106. Positions 106 to 116 are flexible loop; the sequence is QSAHIAQGVNA. ATP is bound by residues 171-173, 237-238, D246, 252-253, A269, and K273; these read DAK, KF, and RK. D246 contributes to the L-methionine binding site. An L-methionine-binding site is contributed by K277.

It belongs to the AdoMet synthase family. In terms of assembly, homotetramer; dimer of dimers. Mg(2+) is required as a cofactor. K(+) serves as cofactor.

Its subcellular location is the cytoplasm. The enzyme catalyses L-methionine + ATP + H2O = S-adenosyl-L-methionine + phosphate + diphosphate. It participates in amino-acid biosynthesis; S-adenosyl-L-methionine biosynthesis; S-adenosyl-L-methionine from L-methionine: step 1/1. Its function is as follows. Catalyzes the formation of S-adenosylmethionine (AdoMet) from methionine and ATP. The overall synthetic reaction is composed of two sequential steps, AdoMet formation and the subsequent tripolyphosphate hydrolysis which occurs prior to release of AdoMet from the enzyme. This is S-adenosylmethionine synthase from Ruegeria pomeroyi (strain ATCC 700808 / DSM 15171 / DSS-3) (Silicibacter pomeroyi).